The following is an 888-amino-acid chain: Translation initiation factor IF-2 (888 aa).

2 disordered regions span residues 96-122 (TTKQ…EAPE) and 158-302 (ELKE…SAPT). Composition is skewed to basic and acidic residues over residues 98–114 (KQDE…EDVS) and 158–167 (ELKEKQEKRR). Polar residues predominate over residues 181–206 (TQVQEPGSETAAVSGSVAATQPESTE). Low complexity predominate over residues 207 to 225 (TAAVTPSATITVTTQTTPA). Basic and acidic residues-rich tracts occupy residues 226-243 (AKER…EKGE) and 253-269 (EAWK…KARG). The 170-residue stretch at 390-559 (SRAPVVTVMG…LLQAEVLELK (170 aa)) folds into the tr-type G domain. The tract at residues 399–406 (GHVDHGKT) is G1. 399 to 406 (GHVDHGKT) is a GTP binding site. The G2 stretch occupies residues 424-428 (GITQH). Positions 445 to 448 (DTPG) are G3. Residues 445-449 (DTPGH) and 499-502 (NKMD) each bind GTP. The tract at residues 499–502 (NKMD) is G4. Residues 535–537 (SAK) are G5.

It belongs to the TRAFAC class translation factor GTPase superfamily. Classic translation factor GTPase family. IF-2 subfamily.

It is found in the cytoplasm. One of the essential components for the initiation of protein synthesis. Protects formylmethionyl-tRNA from spontaneous hydrolysis and promotes its binding to the 30S ribosomal subunits. Also involved in the hydrolysis of GTP during the formation of the 70S ribosomal complex. The chain is Translation initiation factor IF-2 from Nitrosomonas eutropha (strain DSM 101675 / C91 / Nm57).